The primary structure comprises 451 residues: MELEKIRAIISADAARRQEILQAKSYYYNKNDILKKGVVVQNRDENPLRNADNRISHNFHEILVDEKASYMFTYPVLFDIDNNKELNEKVTDVLGNEFTRKAKNLAIEASNCGSAWLHYWIDEEYSGEQVTNQTFKYGVVNTEEIIPIYRNGIERELEAVIRYYIQLEDVKGQIQKQAYTYVEFWTDKILDKYKFFGVSCCGSQIEHITVQHRFNSVPFVEFSNNIKKQSDLSKYKKILDLYDRVMSGFANDLEDIQQIIYILENFGGEDTSEFLKELKRYKTIKTETDSEGDSGGLKTMQIEIPTEARKIILEILKKQIYESGQGLQQDTENFGNASGVALKFFYRKLELKSGLLETEFRTSFDKLIKAILYFLGVTDYKKIQQTYTRNMMSNDLEDADIATKSVGIIPTKIILRHHPWVDDVEEAEKLYLEEKKIQASKVSDDYNNFTE.

This sequence belongs to the SPP1-like portal protein family. Homododecamer.

It is found in the virion. Functionally, forms the portal vertex of the capsid. This portal plays critical roles in head assembly, genome packaging, neck/tail attachment, and genome ejection. The portal protein multimerizes as a single ring-shaped homododecamer arranged around a central channel. Binds to the terminase subunits to form the packaging machine. The protein is Portal protein of Clostridium phage phiCD119 (strain Clostridium difficile/United States/Govind/2006) (Bacteriophage phiCD119).